The sequence spans 527 residues: Catalase (527 aa).

Residues 1–22 (MADSRDPASDQMKLWKEQRAAQ) are compositionally biased toward basic and acidic residues. The interval 1 to 34 (MADSRDPASDQMKLWKEQRAAQKPDVLTTGGGNP) is disordered. At Ala2 the chain carries N-acetylalanine. At Ser9 the chain carries Phosphoserine. Position 13 is an N6-succinyllysine (Lys13). Residues His75 and Asn148 contribute to the active site. Positions 194, 201, 203, and 213 each coordinate NADP(+). N6-succinyllysine is present on Lys221. Lys233 bears the N6-acetyllysine mark. Residues Lys237, Trp303, and His305 each coordinate NADP(+). Tyr358 contributes to the heme binding site. Ser422 and Ser434 each carry phosphoserine. N6-acetyllysine; alternate occurs at positions 449 and 480. 2 positions are modified to N6-succinyllysine; alternate: Lys449 and Lys480. Lys499 is modified (N6-acetyllysine). Thr511 carries the phosphothreonine modification. Phosphoserine is present on Ser517. The short motif at 524–527 (KANL) is the Microbody targeting signal; atypical element.

This sequence belongs to the catalase family. As to quaternary structure, homotetramer. Interacts (via microbody targeting signal) with PEX5, monomeric form interacts with PEX5, leading to its translocation into peroxisomes. It depends on heme as a cofactor. Requires NADP(+) as cofactor.

Its subcellular location is the peroxisome matrix. It carries out the reaction 2 H2O2 = O2 + 2 H2O. In terms of biological role, catalyzes the degradation of hydrogen peroxide (H(2)O(2)) generated by peroxisomal oxidases to water and oxygen, thereby protecting cells from the toxic effects of hydrogen peroxide. Promotes growth of cells including T-cells, B-cells, myeloid leukemia cells, melanoma cells, mastocytoma cells and normal and transformed fibroblast cells. The chain is Catalase (CAT) from Canis lupus familiaris (Dog).